Reading from the N-terminus, the 400-residue chain is Phosphoglycerate kinase (400 aa).

Substrate contacts are provided by residues 21-23, Arg36, 59-62, Arg119, and Arg160; these read DFN and HLGR. Residues Lys211, Glu329, and 356 to 359 each bind ATP; that span reads GGDS.

It belongs to the phosphoglycerate kinase family. In terms of assembly, monomer.

The protein resides in the cytoplasm. It carries out the reaction (2R)-3-phosphoglycerate + ATP = (2R)-3-phospho-glyceroyl phosphate + ADP. The protein operates within carbohydrate degradation; glycolysis; pyruvate from D-glyceraldehyde 3-phosphate: step 2/5. The sequence is that of Phosphoglycerate kinase from Lactiplantibacillus plantarum (strain ATCC BAA-793 / NCIMB 8826 / WCFS1) (Lactobacillus plantarum).